The chain runs to 672 residues: Outer dynein arm-docking complex subunit 4 (672 aa).

8 TPR repeats span residues 13 to 46 (FPSY…QDGD), 48 to 80 (NCLV…DPAF), 81 to 114 (CKGI…RPDR), 275 to 311 (LKSL…NKEE), 320 to 353 (GNLY…AKEY), 360 to 393 (SRAL…AKTT), 397 to 430 (TWLF…AEEE), and 437 to 470 (LNAS…AKLV). Residues 527–544 (RVRDEPEKVVKQWDHSED) show a composition bias toward basic and acidic residues. Residues 527-672 (RVRDEPEKVV…TGNEMEKEYE (146 aa)) form a disordered region. Residues 545-555 (EKETDEDDEAF) show a composition bias toward acidic residues. 2 stretches are compositionally biased toward basic and acidic residues: residues 595 to 650 (ETGR…EELG) and 658 to 672 (GETK…KEYE).

As to quaternary structure, component of the outer dynein arm-docking complex along with ODAD1, ODAD2 and ODAD3. Interacts with ODAD1; this interaction may facilitate the recruitment and/or attachment of outer dynein arm docking complex proteins, including ODAD1, ODAD3 and ODAD2, to ciliary axonemes. Interacts with components of the IFT complex A, including IFT140, TTC21B/IFT139 and WDR19/IFT144, and the IFT complex B, including IFT46, IFT52 and IFT57. Interacts with CFAP53. In terms of tissue distribution, expressed in the nasal mucosa (at protein level).

It localises to the cytoplasm. It is found in the cytoskeleton. The protein resides in the cilium axoneme. In terms of biological role, component of the outer dynein arm-docking complex (ODA-DC) that mediates outer dynein arms (ODA) binding onto the doublet microtubule. Plays an essential role for the assembly of ODA-DC and for the docking of ODA in ciliary axoneme. This chain is Outer dynein arm-docking complex subunit 4, found in Homo sapiens (Human).